Here is a 2599-residue protein sequence, read N- to C-terminus: Protein DOP1 homolog (2599 aa).

Disordered stretches follow at residues 532 to 571 (EQSG…SDSR) and 595 to 701 (ASNQ…LDEE). 3 stretches are compositionally biased toward polar residues: residues 534 to 549 (SGGS…NSAS), 595 to 604 (ASNQSVGRQS), and 625 to 636 (ASDTGQQSSSDL). Ser-753 carries the post-translational modification Phosphoserine. Residues 1240–1251 (PRIEIPHKETPL) are compositionally biased toward basic and acidic residues. Disordered stretches follow at residues 1240-1316 (PRIE…SSSA) and 1347-1368 (TYRL…EQKD). Residues 1264-1282 (QPSQEQPANQPDNSLQYDQ) show a composition bias toward polar residues. Positions 1297-1309 (SELRETSIEKEDS) are enriched in basic and acidic residues. Phosphothreonine is present on Thr-1355. 3 positions are modified to phosphoserine: Ser-1360, Ser-1363, and Ser-1371. The tract at residues 1409–1442 (CISKTSTDSNISGSHVEQPEQEEETEPGTESTIN) is disordered. The span at 1410 to 1423 (ISKTSTDSNISGSH) shows a compositional bias: polar residues. A Phosphoserine modification is found at Ser-2525.

It belongs to the DOP1 family.

It localises to the golgi apparatus membrane. In terms of biological role, may be involved in protein traffic between late Golgi and early endosomes. The protein is Protein DOP1 homolog of Drosophila melanogaster (Fruit fly).